The primary structure comprises 946 residues: Bifunctional glutamine synthetase adenylyltransferase/adenylyl-removing enzyme (946 aa).

The interval 1–440 is adenylyl removase; that stretch reads MKPLSSPLQQ…VFNELIGDDE (440 aa). An adenylyl transferase region spans residues 449–946; the sequence is SEQWRELWQD…ASWQKWLVEE (498 aa).

This sequence belongs to the GlnE family. It depends on Mg(2+) as a cofactor.

The enzyme catalyses [glutamine synthetase]-O(4)-(5'-adenylyl)-L-tyrosine + phosphate = [glutamine synthetase]-L-tyrosine + ADP. It catalyses the reaction [glutamine synthetase]-L-tyrosine + ATP = [glutamine synthetase]-O(4)-(5'-adenylyl)-L-tyrosine + diphosphate. In terms of biological role, involved in the regulation of glutamine synthetase GlnA, a key enzyme in the process to assimilate ammonia. When cellular nitrogen levels are high, the C-terminal adenylyl transferase (AT) inactivates GlnA by covalent transfer of an adenylyl group from ATP to specific tyrosine residue of GlnA, thus reducing its activity. Conversely, when nitrogen levels are low, the N-terminal adenylyl removase (AR) activates GlnA by removing the adenylyl group by phosphorolysis, increasing its activity. The regulatory region of GlnE binds the signal transduction protein PII (GlnB) which indicates the nitrogen status of the cell. The protein is Bifunctional glutamine synthetase adenylyltransferase/adenylyl-removing enzyme of Escherichia coli O45:K1 (strain S88 / ExPEC).